A 942-amino-acid chain; its full sequence is Leucine--tRNA ligase (942 aa).

The short motif at 41–51 (PYLNGVLHAGH) is the 'HIGH' region element. Residues 633–637 (KLSKS) carry the 'KMSKS' region motif. An ATP-binding site is contributed by K636.

It belongs to the class-I aminoacyl-tRNA synthetase family.

The protein resides in the cytoplasm. It carries out the reaction tRNA(Leu) + L-leucine + ATP = L-leucyl-tRNA(Leu) + AMP + diphosphate. The protein is Leucine--tRNA ligase of Methanocaldococcus jannaschii (strain ATCC 43067 / DSM 2661 / JAL-1 / JCM 10045 / NBRC 100440) (Methanococcus jannaschii).